The sequence spans 934 residues: Serine/threonine-protein kinase KIPK1 (934 aa).

Disordered regions lie at residues 20–40 (LPKH…KDLV), 70–113 (RLMS…RFVG), 189–227 (PLMP…FGLQ), 305–343 (SSSA…RPKQ), 395–438 (SIDD…SCNV), and 466–493 (EKET…DYSR). Composition is skewed to polar residues over residues 82 to 94 (SASA…TSPS) and 212 to 227 (NPIS…FGLQ). Positions 395-421 (SIDDNPPSYTSSHNPKICTDSLSSVSN) are enriched in polar residues. Positions 538-879 (FNLLKKLGCG…SVEIKRHPFF (342 aa)) constitute a Protein kinase domain. Residues 544–552 (LGCGDIGTV) and Lys-567 contribute to the ATP site. The Proton acceptor role is filled by Asp-663. Residues 738–773 (SSNQQQGRKPKRGDHLSKTQQHLSRSLPQLVAEPTE) form a disordered region. Residues 755–764 (KTQQHLSRSL) are compositionally biased toward polar residues.

This sequence belongs to the protein kinase superfamily. Ser/Thr protein kinase family. As to quaternary structure, interacts with KCBP. Interacts with PERK8, PERK9, PERK10 and PERK13. Autophosphorylated. In terms of tissue distribution, expressed in roots, cauline leaves, flowers and siliques.

Its subcellular location is the cytoplasm. The protein resides in the nucleus. The catalysed reaction is L-seryl-[protein] + ATP = O-phospho-L-seryl-[protein] + ADP + H(+). The enzyme catalyses L-threonyl-[protein] + ATP = O-phospho-L-threonyl-[protein] + ADP + H(+). Its function is as follows. Could be involved in the negative regulation of root growth. This chain is Serine/threonine-protein kinase KIPK1, found in Arabidopsis thaliana (Mouse-ear cress).